Here is a 212-residue protein sequence, read N- to C-terminus: MSNLSSLKKLMVGFLSRHNFSNRDYFSGETYLRTFDHYTIIDKVYTTKYGICMELNYVFHIILTNHHIPNYLVKCHKKKSNGDFYDLFHLAIIVELDGSKYFIDVGFGEHFIEPVELNHNSITGNIKVIFNQLENTNISTYDISTNNILILRVTDEPLNNIKHIESNYQKFFHSKPEEFPLCRVLFERKFDAKTNQYIPLVPDYQYIKKANY.

Catalysis depends on cysteine 52, which acts as the Acyl-thioester intermediate. Catalysis depends on residues histidine 89 and aspartate 104.

It belongs to the arylamine N-acetyltransferase family.

This is an uncharacterized protein from Acanthamoeba polyphaga (Amoeba).